We begin with the raw amino-acid sequence, 3033 residues long: Genome polyprotein (3033 aa).

S2 carries the post-translational modification N-acetylserine; by host. Residues S2 to K23 are interaction with STAT1. The interaction with EIF2AK2/PKR stretch occupies residues S2–P58. Residues S2–R59 are interaction with DDX3X. The interval S2–S75 is disordered. The Cytoplasmic portion of the chain corresponds to S2–N168. 2 short sequence motifs (nuclear localization signal) span residues P5–R13 and P38–R43. Over residues P7–N16 the composition is skewed to basic residues. Low complexity predominate over residues G32–R47. At S53 the chain carries Phosphoserine; by host. Short sequence motifs (nuclear localization signal) lie at residues P58–P64 and P66–S71. 2 positions are modified to phosphoserine; by host: S99 and S116. The segment at P112–A152 is important for endoplasmic reticulum and mitochondrial localization. The segment at V122–S173 is interaction with APOA2. The tract at residues Y164–G167 is important for lipid droplets localization. The chain crosses the membrane as a helical span at residues L169–V189. Residues L178–A191 constitute a propeptide, ER anchor for the core protein, removed in mature form by host signal peptidase. Over S190–G358 the chain is Lumenal. 3 N-linked (GlcNAc...) asparagine; by host glycosylation sites follow: N196, N209, and N234. The interval I265–Q296 is important for fusion. Residue N305 is glycosylated (N-linked (GlcNAc...) asparagine; by host). Residues L359–A379 traverse the membrane as a helical segment. Residues G380–L729 lie on the Lumenal side of the membrane. An HVR1 region spans residues T385 to Q412. N-linked (GlcNAc...) (high mannose) asparagine; by host glycosylation is found at N417, N423, and N430. Disulfide bonds link C429–C554, C452–C459, C488–C496, and C505–C510. N-linked (GlcNAc...) asparagine; by host glycosylation occurs at N448. Positions E475–N480 are HVR2. An N-linked (GlcNAc...) asparagine; by host glycan is attached at N477. The interval D482–P495 is CD81-binding 1. N534 carries N-linked (GlcNAc...) asparagine; by host glycosylation. The tract at residues P546–G553 is CD81-binding 2. N558 is a glycosylation site (N-linked (GlcNAc...) asparagine; by host). Disulfide bonds link C566–C571, C585–C589, C601–C624, and C611–C648. 2 N-linked (GlcNAc...) (high mannose) asparagine; by host glycosylation sites follow: N627 and N649. C656 and C681 are joined by a disulfide. Residues S664–E675 form a PKR/eIF2-alpha phosphorylation homology domain (PePHD) region. A helical membrane pass occupies residues L730 to A750. The Lumenal segment spans residues A751–A761. Residues S762–I782 traverse the membrane as a helical segment. Residues K783–V786 are Cytoplasmic-facing. Residues T787 to L807 traverse the membrane as a helical segment. At P808 to T817 the chain is on the lumenal side. The chain crosses the membrane as a helical span at residues E818–A838. The Cytoplasmic segment spans residues Y839–C885. A helical transmembrane segment spans residues P886 to L906. The Peptidase C18 domain maps to G903–L1030. Residues R907 to L932 are Lumenal-facing. Residues S908–R1210 form a protease NS2-3 region. C926 is lipidated: S-palmitoyl cysteine; by host. The helical transmembrane segment at S933–I953 threads the bilayer. Residues S933–I953 form an interaction with host SCPS1 region. The Cytoplasmic segment spans residues Y954–T1661. Active-site for protease NS2 activity; shared with dimeric partner residues include H956, E976, and C997. The Peptidase S29 domain occupies A1031–P1212. Active-site charge relay system; for serine protease NS3 activity residues include H1087 and D1111. Residues C1127 and C1129 each contribute to the Zn(2+) site. The Charge relay system; for serine protease NS3 activity role is filled by S1169. Zn(2+)-binding residues include C1175 and H1179. The Helicase ATP-binding domain occupies P1221–H1373. A1234 to S1241 is an ATP binding site. Mg(2+) contacts are provided by S1241 and E1321. A DECH box motif is present at residues D1320 to H1323. An RNA-binding region spans residues Q1490–I1502. The chain crosses the membrane as a helical span at residues S1662–G1682. Residues C1683–Q1694 form an NS3-binding region. At C1683 to T1809 the chain is on the cytoplasmic side. The chain crosses the membrane as a helical span at residues T1810 to A1830. At T1831–G1832 the chain is on the lumenal side. A helical membrane pass occupies residues F1833–V1853. A topological domain (cytoplasmic) is located at residue D1854. The helical transmembrane segment at V1855–G1875 threads the bilayer. The Lumenal segment spans residues E1876 to N1885. A helical transmembrane segment spans residues L1886–L1906. The Cytoplasmic portion of the chain corresponds to R1907–C1976. C1976 is lipidated: S-palmitoyl cysteine; by host. The stretch at A1977–M2007 is an intramembrane region. Residues P2008–R3012 lie on the Cytoplasmic side of the membrane. Positions 2015, 2033, 2035, and 2056 each coordinate Zn(2+). Residues E2124–A2212 form an FKBP8-binding region. The segment at E2124 to A2332 is transcriptional activation. The tract at residues P2139–P2143 is interaction with non-structural protein 4A. The interval R2193 to A2212 is disordered. The interaction with host SKP2 stretch occupies residues R2193–E2460. Residues S2198, S2201, S2205, S2208, S2211, and S2214 each carry the phosphoserine; by host modification. Residues S2198–A2212 are compositionally biased toward low complexity. Residues S2214–K2249 are ISDR. Residues S2214–L2275 form an interaction with EIF2AK2/PKR region. An NS4B-binding region spans residues K2249–Y2306. Residues E2299–P2376 form a V3 region. A disordered region spans residues P2308–R2328. The SH3-binding motif lies at A2322–P2325. Residues P2327–L2335 carry the Nuclear localization signal motif. K2350 is covalently cross-linked (Glycyl lysine isopeptide (Lys-Gly) (interchain with G-Cter in ubiquitin)). Positions G2353 to T2431 are disordered. The span at S2361–T2373 shows a compositional bias: polar residues. A phosphoserine; by host mark is found at S2471 and S2484. Residues P2656 to D2774 enclose the RdRp catalytic domain. Mg(2+)-binding residues include D2662, D2760, and D2761. A helical membrane pass occupies residues F3013–R3033.

It belongs to the hepacivirus polyprotein family. In terms of assembly, homooligomer. Interacts with E1 (via C-terminus). Interacts with the non-structural protein 5A. Interacts (via N-terminus) with host STAT1 (via SH2 domain); this interaction results in decreased STAT1 phosphorylation and ubiquitin-mediated proteasome-dependent STAT1 degradation, leading to decreased IFN-stimulated gene transcription. Interacts with host STAT3; this interaction constitutively activates STAT3. Interacts with host LTBR receptor. Interacts with host TNFRSF1A receptor and possibly induces apoptosis. Interacts with host HNRPK. Interacts with host YWHAE. Interacts with host UBE3A/E6AP. Interacts with host DDX3X. Interacts with host APOA2. Interacts with host RXRA protein. Interacts with host SP110 isoform 3/Sp110b; this interaction sequesters the transcriptional corepressor SP110 away from the nucleus. Interacts with host CREB3 nuclear transcription protein; this interaction triggers cell transformation. Interacts with host ACY3. Interacts with host C1QR1. Interacts with host RBM24; this interaction, which enhances the interaction of the mature core protein with 5'-UTR, may inhibit viral translation and favor replication. Interacts with host EIF2AK2/PKR; this interaction induces the autophosphorylation of EIF2AK2. Part of the viral assembly initiation complex composed of NS2, E1, E2, NS3, NS4A, NS5A and the mature core protein. As to quaternary structure, forms a heterodimer with envelope glycoprotein E2. Interacts with mature core protein. Interacts with protease NS2. The heterodimer E1/E2 interacts with host CLDN1; this interaction plays a role in viral entry into host cell. Interacts with host SPSB2 (via C-terminus). Part of the viral assembly initiation complex composed of NS2, E1, E2, NS3, NS4A, NS5A and the mature core protein. Interacts with host NEURL3; this interaction prevents E1 binding to glycoprotein E2. Forms a heterodimer with envelope glycoprotein E1. Interacts with host CD81 and SCARB1 receptors; these interactions play a role in viral entry into host cell. Interacts with host EIF2AK2/PKR; this interaction inhibits EIF2AK2 and probably allows the virus to evade the innate immune response. Interacts with host CD209/DC-SIGN and CLEC4M/DC-SIGNR. Interact with host SPCS1; this interaction is essential for viral particle assembly. Interacts with protease NS2. The heterodimer E1/E2 interacts with host CLDN1; this interaction plays a role in viral entry into host cell. Part of the viral assembly initiation complex composed of NS2, E1, E2, NS3, NS4A, NS5A and the mature core protein. Interacts with host SLC3A2/4F2hc; the interaction may facilitate viral entry into host cell. Interacts with human PLSCR1. In terms of assembly, homohexamer. Homoheptamer. Interacts with protease NS2. As to quaternary structure, homodimer. Interacts with host SPCS1; this interaction is essential for viral particle assembly. Interacts with envelope glycoprotein E1. Interacts with envelope glycoprotein E2. Interacts with viroporin p7. Interacts with serine protease/helicase NS3. Part of the replication complex composed of NS2, NS3, NS4A, NS4B, NS5A and the RNA-directed RNA polymerase embedded in an ER-derived membranous web. Part of the viral assembly initiation complex composed of NS2, E1, E2, NS3, NS4A, NS5A and the mature core protein. Interacts with protease NS2. Interacts with non-structural protein 4A; this interaction stabilizes the folding of NS3 serine protease. NS3-NS4A interaction is essential for NS3 activation and allows membrane anchorage of the latter. NS3/NS4A complex also prevents phosphorylation of host IRF3, thus preventing the establishment of dsRNA induced antiviral state. Interacts with host MAVS; this interaction leads to the cleavage and inhibition of host MAVS. Interacts with host TICAM1; this interaction leads to the cleavage and inhibition of host TICAM1. Interacts with host TANK-binding kinase/TBK1; this interaction results in the inhibition of the association between TBK1 and IRF3, which leads to the inhibition of IRF3 activation. Interacts with host RBM24. Part of the replication complex composed of NS2, NS3, NS4A, NS4B, NS5A and the RNA-directed RNA polymerase embedded in an ER-derived membranous web. Part of the viral assembly initiation complex composed of NS2, E1, E2, NS3, NS4A, NS5A and the mature core protein. In terms of assembly, interacts with NS3 serine protease; this interaction stabilizes the folding of NS3 serine protease. NS3-NS4A interaction is essential for NS3 activation and allows membrane anchorage of the latter. Interacts with non-structural protein 5A (via N-terminus). Part of the replication complex composed of NS2, NS3, NS4A, NS4B, NS5A and the RNA-directed RNA polymerase embedded in an ER-derived membranous web. Part of the viral assembly initiation complex composed of NS2, E1, E2, NS3, NS4A, NS5A and the mature core protein. As to quaternary structure, homomultimer. Interacts with non-structural protein NS5A. Interacts with host PLA2G4C; this interaction likely initiates the recruitment of replication complexes to lipid droplets. Interacts with host STING; this interaction disrupts the interaction between STING and TBK1 thereby suppressing the interferon signaling. Part of the replication complex composed of NS2, NS3, NS4A, NS4B, NS5A and the RNA-directed RNA polymerase embedded in an ER-derived membranous web. Monomer. Homodimer; dimerization is required for RNA-binding. Interacts with the mature core protein. Interacts (via N-terminus) with non-structural protein 4A. Interacts with non-structural protein 4B. Interacts (via region D2) with RNA-directed RNA polymerase. Part of the viral assembly initiation complex composed of NS2, E1, E2, NS3, NS4A, NS5A and the mature core protein. Part of the replication complex composed of NS2, NS3, NS4A, NS4B, NS5A and the RNA-directed RNA polymerase embedded in an ER-derived membranous web. Interacts with host GRB2. Interacts with host BIN1. Interacts with host PIK3R1. Interacts with host SRCAP. Interacts with host FKBP8. Interacts (via C-terminus) with host VAPB (via MSP domain). Interacts with host EIF2AK2/PKR; this interaction leads to disruption of EIF2AK2 dimerization by NS5A and probably allows the virus to evade the innate immune response. Interacts (via N-terminus) with host PACSIN2 (via N-terminus); this interaction attenuates protein kinase C alpha-mediated phosphorylation of PACSIN2 by disrupting the interaction between PACSIN2 and PRKCA. Interacts (via N-terminus) with host SRC kinase (via SH2 domain). Interacts with most Src-family kinases. Interacts with host IFI27 and SKP2; promotes the ubiquitin-mediated proteasomal degradation of NS5A. Interacts with host GPS2. Interacts with host TNFRSF21; this interaction allows the modulation by the virus of JNK, p38 MAPK, STAT3, and Akt signaling pathways in a DR6-dependent manner. Interacts (via N-terminus) with host CIDEB (via N-terminus); this interaction seems to regulate the association of HCV particles with APOE. Interacts with host CHKA/Choline Kinase-alpha; CHKA bridges host PI4KA and NS5A and potentiates NS5A-stimulated PI4KA activity, which then facilitates the targeting of the ternary complex to the ER for viral replication. Interacts with host SPSB2 (via C-terminus); this interaction targets NS5A for ubiquitination and degradation. Interacts with host RAB18; this interaction may promote the association of NS5A and other replicase components with lipid droplets. Interacts (via region D2) with host PPIA/CYPA; the interaction stimulates RNA-binding ability of NS5A and is dependent on the peptidyl-prolyl cis-trans isomerase activity of PPIA/CYPA. Interacts with host TRIM14; this interaction induces the degradation of NS5A. In terms of assembly, homooligomer. Interacts with non-structural protein 5A. Interacts with host VAPB. Interacts with host PRK2/PKN2. Interacts with host HNRNPA1 and SEPT6; these interactions facilitate viral replication. Part of the replication complex composed of NS2, NS3, NS4A, NS4B, NS5A and the RNA-directed RNA polymerase. It depends on Zn(2+) as a cofactor. Mg(2+) serves as cofactor. Post-translationally, specific enzymatic cleavages in vivo yield mature proteins. The structural proteins, core, E1, E2 and p7 are produced by proteolytic processing by host signal peptidases. The core protein precursor is synthesized as a 23 kDa, which is retained in the ER membrane through the hydrophobic signal peptide. Cleavage by the signal peptidase releases the 21 kDa mature core protein. The cleavage of the core protein precursor occurs between aminoacids 176 and 188 but the exact cleavage site is not known. Some degraded forms of the core protein appear as well during the course of infection. The other proteins (p7, NS2, NS3, NS4A, NS4B, NS5A and NS5B) are cleaved by the viral proteases. Autoprocessing between NS2 and NS3 is mediated by the NS2 cysteine protease catalytic domain and regulated by the NS3 N-terminal domain. In terms of processing, phosphorylated by host PKC and PKA. Ubiquitinated; mediated by UBE3A and leading to core protein subsequent proteasomal degradation. Post-translationally, highly N-glycosylated. In terms of processing, palmitoylation is required for NS2/3 autoprocessing and E2 recruitment to membranes. Palmitoylated. This modification may play a role in its polymerization or in protein-protein interactions. Post-translationally, phosphorylated on serines in a basal form termed p56. p58 is a hyperphosphorylated form of p56. p56 and p58 coexist in the cell in roughly equivalent amounts. Hyperphosphorylation is dependent on the presence of NS4A. Host CSNK1A1/CKI-alpha or RPS6KB1 kinases may be responsible for NS5A phosphorylation. In terms of processing, tyrosine phosphorylation is essential for the interaction with host SRC. Ubiquitinated. Ubiquitination, most probably at Lys-2350, mediated by host IFI27 and SKP2 leads to proteasomal degradation, restricting viral infection. Ubiquitination by host TRIM22 leads to interruption of viral replication. Post-translationally, the N-terminus is phosphorylated by host PRK2/PKN2.

The protein localises to the host endoplasmic reticulum membrane. The protein resides in the host mitochondrion membrane. Its subcellular location is the virion. It localises to the host cytoplasm. It is found in the host nucleus. The protein localises to the host lipid droplet. The protein resides in the virion membrane. Its subcellular location is the host mitochondrion. It localises to the host cell membrane. It is found in the host perinuclear region. It carries out the reaction Hydrolysis of four peptide bonds in the viral precursor polyprotein, commonly with Asp or Glu in the P6 position, Cys or Thr in P1 and Ser or Ala in P1'.. The enzyme catalyses a ribonucleoside 5'-triphosphate + H2O = a ribonucleoside 5'-diphosphate + phosphate + H(+). The catalysed reaction is ATP + H2O = ADP + phosphate + H(+). It catalyses the reaction RNA(n) + a ribonucleoside 5'-triphosphate = RNA(n+1) + diphosphate. Its activity is regulated as follows. Inhibited by the antiviral drug hexamethylene amiloride. Inhibition by amantadine appears to be genotype-dependent. Also inhibited by long-alkyl-chain iminosugar derivatives. With respect to regulation, activity is up-regulated by PRK2/PKN2-mediated phosphorylation. Packages viral RNA to form a viral nucleocapsid, and promotes virion budding. Participates in the viral particle production as a result of its interaction with the non-structural protein 5A. Binds RNA and may function as a RNA chaperone to induce the RNA structural rearrangements taking place during virus replication. Modulates viral translation initiation by interacting with viral IRES and 40S ribosomal subunit. Affects various cell signaling pathways, host immunity and lipid metabolism. Prevents the establishment of cellular antiviral state by blocking the interferon-alpha/beta (IFN-alpha/beta) and IFN-gamma signaling pathways and by blocking the formation of phosphorylated STAT1 and promoting ubiquitin-mediated proteasome-dependent degradation of STAT1. Activates STAT3 leading to cellular transformation. Regulates the activity of cellular genes, including c-myc and c-fos. May repress the promoter of p53, and sequester CREB3 and SP110 isoform 3/Sp110b in the cytoplasm. Represses cell cycle negative regulating factor CDKN1A, thereby interrupting an important check point of normal cell cycle regulation. Targets transcription factors involved in the regulation of inflammatory responses and in the immune response: suppresses TNF-induced NF-kappa-B activation, and activates AP-1. Binds to dendritic cells (DCs) via C1QR1, resulting in down-regulation of T-lymphocytes proliferation. Alters lipid metabolism by interacting with hepatocellular proteins involved in lipid accumulation and storage. Induces up-regulation of FAS promoter activity, and thereby contributes to the increased triglyceride accumulation in hepatocytes (steatosis). In terms of biological role, forms a heterodimer with envelope glycoprotein E2, which mediates virus attachment to the host cell, virion internalization through clathrin-dependent endocytosis and fusion with host membrane. Fusion with the host cell is most likely mediated by both E1 and E2, through conformational rearrangements of the heterodimer required for fusion rather than a classical class II fusion mechanism. E1/E2 heterodimer binds host apolipoproteins such as APOB and ApoE thereby forming a lipo-viro-particle (LVP). APOE associated to the LVP allows the initial virus attachment to cell surface receptors such as the heparan sulfate proteoglycans (HSPGs), syndecan-1 (SDC1), syndecan-1 (SDC2), the low-density lipoprotein receptor (LDLR) and scavenger receptor class B type I (SCARB1). The cholesterol transfer activity of SCARB1 allows E2 exposure and binding of E2 to SCARB1 and the tetraspanin CD81. E1/E2 heterodimer binding on CD81 activates the epithelial growth factor receptor (EGFR) signaling pathway. Diffusion of the complex E1-E2-EGFR-SCARB1-CD81 to the cell lateral membrane allows further interaction with Claudin 1 (CLDN1) and occludin (OCLN) to finally trigger HCV entry. Functionally, forms a heterodimer with envelope glycoprotein E1, which mediates virus attachment to the host cell, virion internalization through clathrin-dependent endocytosis and fusion with host membrane. Fusion with the host cell is most likely mediated by both E1 and E2, through conformational rearrangements of the heterodimer required for fusion rather than a classical class II fusion mechanism. The interaction between envelope glycoprotein E2 and host apolipoprotein E/APOE allows the proper assembly, maturation and infectivity of the viral particles. This interaction is probably promoted via the up-regulation of cellular autophagy by the virus. E1/E2 heterodimer binds host apolipoproteins such as APOB and APOE thereby forming a lipo-viro-particle (LVP). APOE associated to the LVP allows the initial virus attachment to cell surface receptors such as the heparan sulfate proteoglycans (HSPGs), syndecan-1 (SDC1), syndecan-1 (SDC2), the low-density lipoprotein receptor (LDLR) and scavenger receptor class B type I (SCARB1). The cholesterol transfer activity of SCARB1 allows E2 exposure and binding of E2 to SCARB1 and the tetraspanin CD81. E1/E2 heterodimer binding on CD81 activates the epithelial growth factor receptor (EGFR) signaling pathway. Diffusion of the complex E1-E2-EGFR-SCARB1-CD81 to the cell lateral membrane allows further interaction with Claudin 1 (CLDN1) and occludin (OCLN) to finally trigger HCV entry. Inhibits host EIF2AK2/PKR activation, preventing the establishment of an antiviral state. Viral ligand for CD209/DC-SIGN and CLEC4M/DC-SIGNR, which are respectively found on dendritic cells (DCs), and on liver sinusoidal endothelial cells and macrophage-like cells of lymph node sinuses. These interactions allow the capture of circulating HCV particles by these cells and subsequent facilitated transmission to permissive cells such as hepatocytes and lymphocyte subpopulations. The interaction between E2 and host amino acid transporter complex formed by SLC3A2 and SLC7A5/LAT1 may facilitate viral entry into host cell. Its function is as follows. Ion channel protein that acts as a viroporin and plays an essential role in the assembly, envelopment and secretion of viral particles. Regulates the host cell secretory pathway, which induces the intracellular retention of viral glycoproteins and favors assembly of viral particles. Creates a pore in acidic organelles and releases Ca(2+) and H(+) in the cytoplasm of infected cells, leading to a productive viral infection. High levels of cytoplasmic Ca(2+) may trigger membrane trafficking and transport of viral ER-associated proteins to viroplasms, sites of viral genome replication. This ionic imbalance induces the assembly of the inflammasome complex, which triggers the maturation of pro-IL-1beta into IL-1beta through the action of caspase-1. Targets also host mitochondria and induces mitochondrial depolarization. In addition of its role as a viroporin, acts as a lipid raft adhesion factor. Cysteine protease required for the proteolytic auto-cleavage between the non-structural proteins NS2 and NS3. The N-terminus of NS3 is required for the function of NS2 protease (active region NS2-3). Promotes the initiation of viral particle assembly by mediating the interaction between structural and non-structural proteins. In terms of biological role, displays three enzymatic activities: serine protease with a chymotrypsin-like fold, NTPase and RNA helicase. NS3 serine protease, in association with NS4A, is responsible for the cleavages of NS3-NS4A, NS4A-NS4B, NS4B-NS5A and NS5A-NS5B. The NS3/NS4A complex prevents phosphorylation of host IRF3, thus preventing the establishment of dsRNA induced antiviral state. The NS3/NS4A complex induces host amino acid transporter component SLC3A2, thus contributing to HCV propagation. NS3 RNA helicase binds to RNA and unwinds both dsDNA and dsRNA in the 3' to 5' direction, and likely resolves RNA complicated stable secondary structures in the template strand. Binds a single ATP and catalyzes the unzipping of a single base pair of dsRNA. Inhibits host antiviral proteins TBK1 and IRF3 thereby preventing the establishment of an antiviral state. Cleaves host MAVS/CARDIF thereby preventing the establishment of an antiviral state. Cleaves host TICAM1/TRIF, thereby disrupting TLR3 signaling and preventing the establishment of an antiviral state. Functionally, peptide cofactor which forms a non-covalent complex with the N-terminal of NS3 serine protease. The NS3/NS4A complex prevents phosphorylation of host IRF3, thus preventing the establishment of dsRNA induced antiviral state. The NS3/NS4A complex induces host amino acid transporter component SLC3A2, thus contributing to HCV propagation. Its function is as follows. Induces a specific membrane alteration that serves as a scaffold for the virus replication complex. This membrane alteration gives rise to the so-called ER-derived membranous web that contains the replication complex. NS4B self-interaction contributes to its function in membranous web formation. Promotes host TRIF protein degradation in a CASP8-dependent manner thereby inhibiting host TLR3-mediated interferon signaling. Disrupts the interaction between STING and TBK1 contributing to the inhibition of interferon signaling. Phosphorylated protein that is indispensable for viral replication and assembly. Both hypo- and hyperphosphorylated states are required for the viral life cycle. The hyperphosphorylated form of NS5A is an inhibitor of viral replication. Involved in RNA-binding and especially in binding to the viral genome. Zinc is essential for RNA-binding. Participates in the viral particle production as a result of its interaction with the mature viral core protein. Its interaction with host VAPB may target the viral replication complex to vesicles. Down-regulates viral IRES translation initiation. Mediates interferon resistance, presumably by interacting with and inhibiting host EIF2AK2/PKR. Prevents BIN1-induced apoptosis. Acts as a transcriptional activator of some host genes important for viral replication when localized in the nucleus. Via the interaction with host PACSIN2, modulates lipid droplet formation in order to promote virion assembly. Modulates TNFRSF21/DR6 signaling pathway for viral propagation. In terms of biological role, RNA-dependent RNA polymerase that performs primer-template recognition and RNA synthesis during viral replication. Initiates RNA transcription/replication at a flavin adenine dinucleotide (FAD), resulting in a 5'- FAD cap on viral RNAs. In this way, recognition of viral 5' RNA by host pattern recognition receptors can be bypassed, thereby evading activation of antiviral pathways. This Hepatitis C virus genotype 2k (isolate VAT96) (HCV) protein is Genome polyprotein.